We begin with the raw amino-acid sequence, 150 residues long: Cytochrome c oxidase subunit 5A, mitochondrial (150 aa).

The transit peptide at 1-41 directs the protein to the mitochondrion; that stretch reads MLGAALRRCAVAATSRAGPRGLLHSAPNPGPAAAIQSVRCY. The SIFI-degron motif lies at 2–17; it reads LGAALRRCAVAATSRA. N6-acetyllysine is present on residues Lys-87 and Lys-113. Thr-141 carries the phosphothreonine modification.

Belongs to the cytochrome c oxidase subunit 5A family. In terms of assembly, component of the cytochrome c oxidase (complex IV, CIV), a multisubunit enzyme composed of 14 subunits. The complex is composed of a catalytic core of 3 subunits MT-CO1, MT-CO2 and MT-CO3, encoded in the mitochondrial DNA, and 11 supernumerary subunits COX4I, COX5A, COX5B, COX6A, COX6B, COX6C, COX7A, COX7B, COX7C, COX8 and NDUFA4, which are encoded in the nuclear genome. The complex exists as a monomer or a dimer and forms supercomplexes (SCs) in the inner mitochondrial membrane with NADH-ubiquinone oxidoreductase (complex I, CI) and ubiquinol-cytochrome c oxidoreductase (cytochrome b-c1 complex, complex III, CIII), resulting in different assemblies (supercomplex SCI(1)III(2)IV(1) and megacomplex MCI(2)III(2)IV(2)). Interacts with AFG1L. Interacts with RAB5IF. In response to mitochondrial stress, the precursor protein is ubiquitinated by the SIFI complex in the cytoplasm before mitochondrial import, leading to its degradation. Within the SIFI complex, UBR4 initiates ubiquitin chain that are further elongated or branched by KCMF1.

It is found in the mitochondrion inner membrane. It participates in energy metabolism; oxidative phosphorylation. In terms of biological role, component of the cytochrome c oxidase, the last enzyme in the mitochondrial electron transport chain which drives oxidative phosphorylation. The respiratory chain contains 3 multisubunit complexes succinate dehydrogenase (complex II, CII), ubiquinol-cytochrome c oxidoreductase (cytochrome b-c1 complex, complex III, CIII) and cytochrome c oxidase (complex IV, CIV), that cooperate to transfer electrons derived from NADH and succinate to molecular oxygen, creating an electrochemical gradient over the inner membrane that drives transmembrane transport and the ATP synthase. Cytochrome c oxidase is the component of the respiratory chain that catalyzes the reduction of oxygen to water. Electrons originating from reduced cytochrome c in the intermembrane space (IMS) are transferred via the dinuclear copper A center (CU(A)) of subunit 2 and heme A of subunit 1 to the active site in subunit 1, a binuclear center (BNC) formed by heme A3 and copper B (CU(B)). The BNC reduces molecular oxygen to 2 water molecules using 4 electrons from cytochrome c in the IMS and 4 protons from the mitochondrial matrix. The sequence is that of Cytochrome c oxidase subunit 5A, mitochondrial (COX5A) from Saguinus labiatus (Red-chested mustached tamarin).